The chain runs to 261 residues: MNFREKYGQWGIVLGATEGIGKASAFELAKRGMDVILVGRRKEALEELAKAIHEETGKEIRVLPQDLSEYDAAERLIEATKDLDMGVIEYVACLHAMGQYNKVDYAKYEQMYRVNIRTFSKLLHHYIGEFKERDRGAFITIGSLSGWTSLPFCAEYAAEKAYMMTVTEGVAYECANTNVDVMLLSAGSTITPTWLKNKPSDPKAVAAAMYPEDVIKDGFEQLGKKFTYLAGELNREKMKENNAMDRNDLIAKLGKMFDHMA.

Residues 17 to 21 (TEGIG), 40 to 41 (RR), and 66 to 67 (DL) each bind NADP(+). The Proton acceptor role is filled by Tyr-156.

This sequence belongs to the short-chain dehydrogenases/reductases (SDR) family. Homodimer.

It carries out the reaction a 7beta-hydroxysteroid + NADP(+) = a 7-oxosteroid + NADPH + H(+). It catalyses the reaction ursocholate + NADP(+) = 3alpha,12alpha-dihydroxy-7-oxo-5beta-cholanate + NADPH + H(+). The enzyme catalyses 7-oxolithocholate + NADPH + H(+) = ursodeoxycholate + NADP(+). The catalysed reaction is 3alpha,7beta-dihydroxy-12-oxo-5beta-cholan-24-oate + NADP(+) = 7,12-dioxo-lithocholate + NADPH + H(+). It carries out the reaction 7beta-hydroxy-3,12-dioxo-5beta-cholan-24-oate + NADP(+) = dehydrocholate + NADPH + H(+). 7beta-hydroxysteroid dehydrogenase that catalyzes the reduction of the 7-oxo group of 7-oxosteroids, such as 3alpha,12alpha-dihydroxy-7-oxo-5beta-cholanate, 7-oxolithocholate, 7,12-dioxo-lithocholate and dehydrocholate, to the corresponding 7beta-hydroxysteroids. Is also able to catalyze the reverse oxidation reactions. Together with 7alpha-HSDH encoded in the adjacent gene, is likely involved in the epimerization of the hydroxy group at C-7 of primary bile acids through 7-keto bile acid intermediates. The protein is 7beta-hydroxysteroid dehydrogenase of Clostridium sardiniense (Clostridium absonum).